The chain runs to 344 residues: L-rhamnose-proton symporter (344 aa).

10 helical membrane-spanning segments follow: residues 4-24 (AITM…CFYA), 38-58 (WSVG…ALLL), 68-88 (FSLS…IGNI), 101-121 (MGIG…TPII), 137-157 (TLLG…AGQL), 175-195 (LVLA…MNAA), 214-234 (LPSY…FCFI), 259-279 (VLLS…YAWG), 290-310 (ISWM…GLVL), and 323-343 (VLSL…IGMA).

The protein belongs to the L-rhamnose transporter (TC 2.A.7.6) family.

Its subcellular location is the cell inner membrane. It catalyses the reaction L-rhamnopyranose(in) + H(+)(in) = L-rhamnopyranose(out) + H(+)(out). Functionally, uptake of L-rhamnose across the cytoplasmic membrane with the concomitant transport of protons into the cell (symport system). This Escherichia coli O1:K1 / APEC protein is L-rhamnose-proton symporter.